A 649-amino-acid chain; its full sequence is Probable cyclic nucleotide-gated ion channel 12 (649 aa).

The Cytoplasmic segment spans residues 1 to 43 (MNHRRSKFARIDSMGVDGKLKSVRGRLKKVYGKMKTLENWRKT). The chain crosses the membrane as a helical span at residues 44–64 (VLLACVVALAIDPLFLFIPLI). Topologically, residues 65–76 (DSQRFCFTFDKT) are extracellular. Residues 77-97 (LVAVVCVIRTFIDTFYVIHII) form a helical membrane-spanning segment. The Cytoplasmic portion of the chain corresponds to 98–128 (YYLITETIAPRSQASLRGEIVVHSKATLKTR). Residues 129–149 (LLFHFIVDIISVLPIPQVVVL) form a helical membrane-spanning segment. At 150-162 (TLIPLSASLVSER) the chain is on the extracellular side. Residues 163–183 (ILKWIILSQYVPRIIRMYPLY) form a helical membrane-spanning segment. The Cytoplasmic segment spans residues 184 to 200 (KEVTRAFGTVAESKWAG). A helical membrane pass occupies residues 201-221 (AALNLFLYMLHSYVFGAFWYL). Topologically, residues 222–329 (SSIERKSKCW…QNLETSNSAG (108 aa)) are extracellular. The chain crosses the membrane as a helical span at residues 330–350 (EIFFAIIICVSGLLLFAVLIG). The Cytoplasmic segment spans residues 351–649 (NVQKYLQSST…ADLEFAKAEA (299 aa)). A nucleoside 3',5'-cyclic phosphate-binding positions include 436-559 (LNIM…TFRL) and Glu-507. The interval 545 to 560 (LNVFQRQKLQRTFRLY) is calmodulin-binding. The IQ domain occupies 565-594 (RSWAAFFIQAAWRKHCKRKLSKTRDNENIP). Positions 618-649 (RRKDTADCSSSPDMSPPVPHKPADLEFAKAEA) are disordered. Residues 638–649 (KPADLEFAKAEA) are compositionally biased toward basic and acidic residues.

It belongs to the cyclic nucleotide-gated cation channel (TC 1.A.1.5) family. As to quaternary structure, homotetramer or heterotetramer.

It is found in the cell membrane. Functionally, probable cyclic nucleotide-gated ion channel. This chain is Probable cyclic nucleotide-gated ion channel 12 (CNGC12), found in Arabidopsis thaliana (Mouse-ear cress).